We begin with the raw amino-acid sequence, 245 residues long: Glucan endo-1,3-beta-glucosidase (245 aa).

The N-terminal stretch at 1 to 23 (MMKTLVVVLSLSLTILSFGGAHA) is a signal peptide. Intrachain disulfides connect C32-C244, C80-C90, C95-C102, C150-C233, C155-C216, C163-C179, C183-C192, and C193-C203.

Belongs to the thaumatin family. Abundantly expressed in ripening fruit.

It is found in the secreted. It catalyses the reaction Hydrolysis of (1-&gt;3)-beta-D-glucosidic linkages in (1-&gt;3)-beta-D-glucans.. The protein is Glucan endo-1,3-beta-glucosidase of Prunus avium (Cherry).